The primary structure comprises 298 residues: MYRTALRPSQSALRAIRSTTSPSALVSSGARRFASTTSAPKKKSTWKGAAVRWGLAVAAVYYYNTSPIFSDELPETAGTAPSQLTDADLPTVDAIVEEKRRQAAEHAAARKAAQAAAKAAATPATPSESVEEQITKAEAEAEAVPEGDSKPRSESTEGVIPEAGASPEALQEEADAQGAFNPETGEINWDCPCLGGMAHGPCGEEFKAAFSCFVYSTEEPKGMDCIEKFSHMQDCFRKYPEVYGAELADDEEAERASAAAPAAEGTPAKEEPVENKKEEALEPATHDATAANNNKKQQ.

The N-terminal 33 residues, 1–33 (MYRTALRPSQSALRAIRSTTSPSALVSSGARRF), are a transit peptide targeting the mitochondrion. Residues 34-52 (ASTTSAPKKKSTWKGAAVR) lie on the Mitochondrial matrix side of the membrane. Residues 53-69 (WGLAVAAVYYYNTSPIF) form a helical; Signal-anchor for type II membrane protein membrane-spanning segment. Residues 70 to 298 (SDELPETAGT…TAANNNKKQQ (229 aa)) lie on the Mitochondrial intermembrane side of the membrane. Residues 101 to 159 (RQAAEHAAARKAAQAAAKAAATPATPSESVEEQITKAEAEAEAVPEGDSKPRSESTEGV) form a disordered region. Low complexity predominate over residues 110–121 (RKAAQAAAKAAA). Cystine bridges form between Cys191–Cys193, Cys202–Cys235, and Cys212–Cys225. In terms of domain architecture, CHCH spans 199–243 (HGPCGEEFKAAFSCFVYSTEEPKGMDCIEKFSHMQDCFRKYPEVY). 2 consecutive short sequence motifs (cx9C motif) follow at residues 202 to 212 (CGEEFKAAFSC) and 225 to 235 (CIEKFSHMQDC). Residues 248 to 298 (ADDEEAERASAAAPAAEGTPAKEEPVENKKEEALEPATHDATAANNNKKQQ) are disordered. Residues 256-266 (ASAAAPAAEGT) are compositionally biased toward low complexity. Over residues 267-280 (PAKEEPVENKKEEA) the composition is skewed to basic and acidic residues.

In terms of assembly, monomer. It depends on Cu(2+) as a cofactor. The cofactor is Zn(2+).

The protein localises to the mitochondrion inner membrane. Functionally, required for the import and folding of small cysteine-containing proteins (small Tim) in the mitochondrial intermembrane space (IMS). Forms a redox cycle with ERV1 that involves a disulfide relay system. Precursor proteins to be imported into the IMS are translocated in their reduced form into the mitochondria. The oxidized form of MIA40 forms a transient intermolecular disulfide bridge with the reduced precursor protein, resulting in oxidation of the precursor protein that now contains an intramolecular disulfide bond and is able to undergo folding in the IMS. The chain is Mitochondrial intermembrane space import and assembly protein 40 (mia-40) from Neurospora crassa (strain ATCC 24698 / 74-OR23-1A / CBS 708.71 / DSM 1257 / FGSC 987).